Here is a 378-residue protein sequence, read N- to C-terminus: Chaperone protein DnaJ (378 aa).

Positions 5–70 (DFYEILGVSK…EKRSAYDRMG (66 aa)) constitute a J domain. The CR-type zinc-finger motif lies at 137-215 (GCKKEISFTA…CHGNGVKDKS (79 aa)). Positions 150, 153, 167, 170, 189, 192, 203, and 206 each coordinate Zn(2+). CXXCXGXG motif repeat units follow at residues 150-157 (CDTCDGKG), 167-174 (CQTCHGQG), 189-196 (CPHCGGTG), and 203-210 (CSDCHGNG).

The protein belongs to the DnaJ family. As to quaternary structure, homodimer. It depends on Zn(2+) as a cofactor.

The protein resides in the cytoplasm. In terms of biological role, participates actively in the response to hyperosmotic and heat shock by preventing the aggregation of stress-denatured proteins and by disaggregating proteins, also in an autonomous, DnaK-independent fashion. Unfolded proteins bind initially to DnaJ; upon interaction with the DnaJ-bound protein, DnaK hydrolyzes its bound ATP, resulting in the formation of a stable complex. GrpE releases ADP from DnaK; ATP binding to DnaK triggers the release of the substrate protein, thus completing the reaction cycle. Several rounds of ATP-dependent interactions between DnaJ, DnaK and GrpE are required for fully efficient folding. Also involved, together with DnaK and GrpE, in the DNA replication of plasmids through activation of initiation proteins. The protein is Chaperone protein DnaJ of Psychrobacter cryohalolentis (strain ATCC BAA-1226 / DSM 17306 / VKM B-2378 / K5).